Reading from the N-terminus, the 340-residue chain is Putative inactive cytochrome P450 family member 4Z2 (340 aa).

The Cytoplasmic portion of the chain corresponds to 1 to 9; the sequence is MEPSWLQEL. A helical; Signal-anchor for type II membrane protein membrane pass occupies residues 10–30; sequence MAHPFLLLILLCMSLLLFQVI. Residues 31 to 340 lie on the Lumenal side of the membrane; that stretch reads RLYQRRRWTI…AKYPEHQQRC (310 aa).

Belongs to the cytochrome P450 family. Heme serves as cofactor. In terms of tissue distribution, detected at low levels in mammary gland and mammary carcinoma.

Its subcellular location is the membrane. The protein is Putative inactive cytochrome P450 family member 4Z2 (CYP4Z2P) of Homo sapiens (Human).